Reading from the N-terminus, the 210-residue chain is Leucyl/phenylalanyl-tRNA--protein transferase (210 aa).

Belongs to the L/F-transferase family.

The protein localises to the cytoplasm. It catalyses the reaction N-terminal L-lysyl-[protein] + L-leucyl-tRNA(Leu) = N-terminal L-leucyl-L-lysyl-[protein] + tRNA(Leu) + H(+). The catalysed reaction is N-terminal L-arginyl-[protein] + L-leucyl-tRNA(Leu) = N-terminal L-leucyl-L-arginyl-[protein] + tRNA(Leu) + H(+). The enzyme catalyses L-phenylalanyl-tRNA(Phe) + an N-terminal L-alpha-aminoacyl-[protein] = an N-terminal L-phenylalanyl-L-alpha-aminoacyl-[protein] + tRNA(Phe). In terms of biological role, functions in the N-end rule pathway of protein degradation where it conjugates Leu, Phe and, less efficiently, Met from aminoacyl-tRNAs to the N-termini of proteins containing an N-terminal arginine or lysine. This Ruegeria pomeroyi (strain ATCC 700808 / DSM 15171 / DSS-3) (Silicibacter pomeroyi) protein is Leucyl/phenylalanyl-tRNA--protein transferase.